Here is a 207-residue protein sequence, read N- to C-terminus: Ribosomal RNA small subunit methyltransferase G (207 aa).

Residues Gly73, Leu78, 124–125 (VE), and Arg139 each bind S-adenosyl-L-methionine.

It belongs to the methyltransferase superfamily. RNA methyltransferase RsmG family.

Its subcellular location is the cytoplasm. It catalyses the reaction guanosine(527) in 16S rRNA + S-adenosyl-L-methionine = N(7)-methylguanosine(527) in 16S rRNA + S-adenosyl-L-homocysteine. Functionally, specifically methylates the N7 position of guanine in position 527 of 16S rRNA. The protein is Ribosomal RNA small subunit methyltransferase G of Salmonella arizonae (strain ATCC BAA-731 / CDC346-86 / RSK2980).